The sequence spans 399 residues: Putative 8-amino-7-oxononanoate synthase (399 aa).

A substrate-binding site is contributed by Arg-23. Residue 110 to 111 coordinates pyridoxal 5'-phosphate; that stretch reads GY. A substrate-binding site is contributed by His-135. Residues Ser-183, 208 to 211, and 239 to 242 contribute to the pyridoxal 5'-phosphate site; these read DEAH and TLSK. At Lys-242 the chain carries N6-(pyridoxal phosphate)lysine. Thr-364 provides a ligand contact to substrate.

This sequence belongs to the class-II pyridoxal-phosphate-dependent aminotransferase family. BioF subfamily. As to quaternary structure, homodimer. Pyridoxal 5'-phosphate serves as cofactor.

It catalyses the reaction 6-carboxyhexanoyl-[ACP] + L-alanine + H(+) = (8S)-8-amino-7-oxononanoate + holo-[ACP] + CO2. It functions in the pathway cofactor biosynthesis; biotin biosynthesis. Functionally, catalyzes the decarboxylative condensation of pimeloyl-[acyl-carrier protein] and L-alanine to produce 8-amino-7-oxononanoate (AON), [acyl-carrier protein], and carbon dioxide. In Cyanothece sp. (strain PCC 7425 / ATCC 29141), this protein is Putative 8-amino-7-oxononanoate synthase (bioF).